A 53-amino-acid polypeptide reads, in one-letter code: Mannose/glucose-specific lectin alpha 2 chain (53 aa).

Belongs to the leguminous lectin family. Tetramer of two alpha and two beta chains.

The protein is Mannose/glucose-specific lectin alpha 2 chain of Lathyrus ochrus (Cyprus-vetch).